The primary structure comprises 97 residues: Co-chaperonin GroES (97 aa).

This sequence belongs to the GroES chaperonin family. As to quaternary structure, heptamer of 7 subunits arranged in a ring. Interacts with the chaperonin GroEL.

It is found in the cytoplasm. Functionally, together with the chaperonin GroEL, plays an essential role in assisting protein folding. The GroEL-GroES system forms a nano-cage that allows encapsulation of the non-native substrate proteins and provides a physical environment optimized to promote and accelerate protein folding. GroES binds to the apical surface of the GroEL ring, thereby capping the opening of the GroEL channel. This is Co-chaperonin GroES from Pseudomonas entomophila (strain L48).